A 340-amino-acid polypeptide reads, in one-letter code: Large ribosomal subunit protein uL10 (340 aa).

Residues 305-340 are disordered; the sequence is APQPAEEKVEEAEEEEEEEEEASEEEALAGLGALFG. Over residues 312 to 331 the composition is skewed to acidic residues; it reads KVEEAEEEEEEEEEASEEEA.

The protein belongs to the universal ribosomal protein uL10 family. Part of the 50S ribosomal subunit. Forms part of the ribosomal stalk which helps the ribosome interact with GTP-bound translation factors. Forms a heptameric L10(L12)2(L12)2(L12)2 complex, where L10 forms an elongated spine to which the L12 dimers bind in a sequential fashion.

Forms part of the ribosomal stalk, playing a central role in the interaction of the ribosome with GTP-bound translation factors. This is Large ribosomal subunit protein uL10 from Thermococcus gammatolerans (strain DSM 15229 / JCM 11827 / EJ3).